The following is a 318-amino-acid chain: Biotin synthase (318 aa).

The region spanning 40–260 (DDIQKASLLS…VATARIIMPL (221 aa)) is the Radical SAM core domain. [4Fe-4S] cluster contacts are provided by C55, C59, and C62. The [2Fe-2S] cluster site is built by C100, C132, C192, and R264.

The protein belongs to the radical SAM superfamily. Biotin synthase family. In terms of assembly, homodimer. [4Fe-4S] cluster serves as cofactor. The cofactor is [2Fe-2S] cluster.

It carries out the reaction (4R,5S)-dethiobiotin + (sulfur carrier)-SH + 2 reduced [2Fe-2S]-[ferredoxin] + 2 S-adenosyl-L-methionine = (sulfur carrier)-H + biotin + 2 5'-deoxyadenosine + 2 L-methionine + 2 oxidized [2Fe-2S]-[ferredoxin]. Its pathway is cofactor biosynthesis; biotin biosynthesis; biotin from 7,8-diaminononanoate: step 2/2. Functionally, catalyzes the conversion of dethiobiotin (DTB) to biotin by the insertion of a sulfur atom into dethiobiotin via a radical-based mechanism. This chain is Biotin synthase, found in Ruegeria pomeroyi (strain ATCC 700808 / DSM 15171 / DSS-3) (Silicibacter pomeroyi).